The sequence spans 1001 residues: Integrator complex subunit 7 (1001 aa).

Residues 980–1001 are disordered; sequence DPSKQGAPAPSTSQAVGQTRRF. The span at 989–1001 shows a compositional bias: polar residues; that stretch reads PSTSQAVGQTRRF.

Belongs to the Integrator subunit 7 family. As to quaternary structure, belongs to the multiprotein complex Integrator, at least composed of IntS1, IntS2, IntS3, IntS4, omd/IntS5, IntS6, defl/IntS7, IntS8, IntS9, IntS10, IntS11, IntS12, asun/IntS13, IntS14 and IntS15. The core complex associates with protein phosphatase 2A subunits mts/PP2A and Pp2A-29B, to form the Integrator-PP2A (INTAC) complex.

Its subcellular location is the nucleus. The protein localises to the cytoplasm. In terms of biological role, component of the integrator complex, a multiprotein complex that terminates RNA polymerase II (Pol II) transcription in the promoter-proximal region of genes. The integrator complex provides a quality checkpoint during transcription elongation by driving premature transcription termination of transcripts that are unfavorably configured for transcriptional elongation: the complex terminates transcription by (1) catalyzing dephosphorylation of the C-terminal domain (CTD) of Pol II subunit Polr2A/Rbp1 and Spt5, and (2) degrading the exiting nascent RNA transcript via endonuclease activity. The integrator complex is also involved in the 3'-end processing of the U7 snRNA, and also the spliceosomal snRNAs U1, U2, U4 and U5. This Drosophila melanogaster (Fruit fly) protein is Integrator complex subunit 7.